The sequence spans 360 residues: Mannose-1-phosphate guanylyltransferase catalytic subunit beta (360 aa).

The segment at 2–222 is substrate-binding domain; the sequence is KALILVGGYG…QGFWMDIGQP (221 aa). A GDP-alpha-D-mannose-binding site is contributed by D110. D110 contributes to the Mg(2+) binding site. K162 is an active-site residue. Residue D218 participates in GDP-alpha-D-mannose binding. D218 provides a ligand contact to Mg(2+). Positions 245-360 are hexapeptide repeat domain; the sequence is RAGPGFLGNV…DSVPEPRIIM (116 aa).

This sequence belongs to the transferase hexapeptide repeat family. Component of the GMPPA-GMPPB mannose-1-phosphate guanylyltransferase complex composed of 4 gmppa subunits and 8 gmppb subunits; the complex is organized into three layers, a central layer made up of 2 gmppa dimers sandwiched between two layers each made up of 2 gmppb dimers. Catalytic activity of gmppb is reduced when part of the complex and binding of GDP-alpha-D-Mannose by gmppa induces allosteric feedback inhibition of gmppb. It depends on Mg(2+) as a cofactor.

The catalysed reaction is alpha-D-mannose 1-phosphate + GTP + H(+) = GDP-alpha-D-mannose + diphosphate. It functions in the pathway nucleotide-sugar biosynthesis; GDP-alpha-D-mannose biosynthesis; GDP-alpha-D-mannose from alpha-D-mannose 1-phosphate (GTP route): step 1/1. Its activity is regulated as follows. Enzyme activity is reduced by incorporation into the GMPPA-GMPPB mannose-1-phosphate guanylyltransferase complex. Allosterically inhibited, when part of the GMPPA-GMPPB complex, by GDP-alpha-D-mannose binding to GMPPA. In terms of biological role, catalytic subunit of the GMPPA-GMPPB mannose-1-phosphate guanylyltransferase complex. Catalyzes the formation of GDP-mannose, an essential precursor of glycan moieties of glycoproteins and glycolipids. Can catalyze the reverse reaction in vitro. Together with GMPPA regulates GDP-alpha-D-mannose levels. The protein is Mannose-1-phosphate guanylyltransferase catalytic subunit beta (gmppb) of Danio rerio (Zebrafish).